A 634-amino-acid polypeptide reads, in one-letter code: MSTATNPLDLDVCAREPIHIPGLIQPYGVLLVIDPADGRIVQASTTAADLLGVPMAALLGMPYTQVLTLPEAQPFAVDDQPQHLMHAEVRFPQRATPPASAWVAAWHLYPQQWLVEMEPRDARLLDVTLREAMPLLRSVERDPGIAEAAVRVAKGLRSLIGFDRVMIYRFDEEWNGDIIAEARKPELEAYLGLHYPASDIPAQARALYLRNRVRQIADVGYQPSPIQPTVHPQLGTPVDLSDVSLRSVSPVHLEYLANMGVTATLVASIVVNDALWGLISCHHYSPHFTNHAMRDVTDAVARTLAGRIGALQAVARARLESVLLTVREKLITDFNDAEHMTVELLDDMAPDLMDVVDADGVAIFHGNDISRHGTTPDVAALRRIRDHIESEHHEALREDAVGALHVDAIGEVFPELADLAPLAAGFIFVPLMPQSRSALLWTRREQIQQIKWAGNPQLAKLEDIPNSRLSPRKSFDLWQQTVRGRARRWSPLHLESARSLRVLIELMERKRFQQDFTLLEASLSRLRDGVAIIERGTANAAHRLLFVNTAFADVCGSDVAELIGRELQTLYASDAPRANVELLQDALRNGRAAYVTLPLQVSDGAPVYRQFHLEPLPSPSGVTAHWLLQLRDPE.

Residue cysteine 13 participates in biliverdin IXalpha binding. The region spanning 13-118 (CAREPIHIPG…YPQQWLVEME (106 aa)) is the PAS 1 domain. Residues 13 to 514 (CAREPIHIPG…ELMERKRFQQ (502 aa)) form a photosensory core domain region. The GAF domain maps to 151–305 (RVAKGLRSLI…VTDAVARTLA (155 aa)). The phytochrome-specific (PHY) stretch occupies residues 325 to 508 (TVREKLITDF…SLRVLIELME (184 aa)). Positions 452-480 (WAGNPQLAKLEDIPNSRLSPRKSFDLWQQ) are tongue domain. One can recognise a PAS 2 domain in the interval 515–590 (DFTLLEASLS…ELLQDALRNG (76 aa)). The PAS9, output module, not required to bind biliverdin IX-alpha, required for dimerization stretch occupies residues 515–634 (DFTLLEASLS…HWLLQLRDPE (120 aa)).

It in the N-terminal section; belongs to the phytochrome family. As to quaternary structure, forms head-to-head homodimers. Contains one covalently linked biliverdin IX-alpha chromophore; present in the crystal structure as a mixture of Pr and Meta-R configurations.

Photoreceptor which exists in two forms that are reversibly interconvertible by light: far-red light (733 nm) converts protein to the red-absorbing (Pr) form, while red light (630 nm) partly converts the protein to the far-red-absorbing (Pfr) form. Regulates virulence of X.campestris pv. campestris on its host plants, perhaps by fine-tuning expression to ambient light levels and/or spatial cues. The Pr form may sense light and partially inhibit virulence; in the dark (Pfr form) biofilm and xanathan production rise and bacteria are more virulent. Strains overexpressing this protein have significantly decreased amounts of extracellular beta-1,4-endoglucanase, produce less xanthin and have decreased transcription of genes involved in virulence such as endoglucanases, type 2 secretion systems, xanthan production and flagellar-dependent motility. The chain is Bacteriophytochrome (bphP) from Xanthomonas campestris pv. campestris (strain 8004).